The chain runs to 176 residues: Woronin body major protein (176 aa).

A propeptide spanning residues 1–16 (MGYYDDDAHGHVEADA) is cleaved from the precursor. Residues 1-16 (MGYYDDDAHGHVEADA) are compositionally biased toward basic and acidic residues. Residues 1 to 31 (MGYYDDDAHGHVEADAAPRATTGTGTGSASQ) form a disordered region. The Microbody targeting signal motif lies at 174–176 (SRL).

This sequence belongs to the eIF-5A family. Hex1 subfamily. In terms of assembly, forms oligomers. Self-assembles into hexagonal rods.

It localises to the cell septum. Major component of Woronin bodies, fungal-specific organelles that occlude septal pores in order to separate intact from damaged compartments. Hex-1 binds directly or indirectly to the Woronin body tether that in turn is anchored at the rim of the septal pore. This is Woronin body major protein from Neurospora crassa (strain ATCC 24698 / 74-OR23-1A / CBS 708.71 / DSM 1257 / FGSC 987).